A 177-amino-acid polypeptide reads, in one-letter code: Peptide methionine sulfoxide reductase MsrA 2 (177 aa).

C12 is an active-site residue.

Belongs to the MsrA Met sulfoxide reductase family.

The catalysed reaction is L-methionyl-[protein] + [thioredoxin]-disulfide + H2O = L-methionyl-(S)-S-oxide-[protein] + [thioredoxin]-dithiol. It catalyses the reaction [thioredoxin]-disulfide + L-methionine + H2O = L-methionine (S)-S-oxide + [thioredoxin]-dithiol. Its function is as follows. Has an important function as a repair enzyme for proteins that have been inactivated by oxidation. Catalyzes the reversible oxidation-reduction of methionine sulfoxide in proteins to methionine. This Staphylococcus aureus (strain Mu50 / ATCC 700699) protein is Peptide methionine sulfoxide reductase MsrA 2 (msrA2).